We begin with the raw amino-acid sequence, 137 residues long: Type 3 secretion system pilotin (137 aa).

The N-terminal stretch at 1 to 14 is a signal peptide; sequence MLLPLALLLGGCVS.

Belongs to the ExsB/YscW family.

It localises to the cell outer membrane. Involved in the synthesis of the type III secretion system (T3SS), also called injectisome, which is used to inject bacterial effector proteins into eukaryotic host cells. Pilot protein that is required for the proper localization of the secretin PscC in the outer membrane. Necessary for full in vivo virulence. This chain is Type 3 secretion system pilotin, found in Pseudomonas aeruginosa (strain ATCC 15692 / DSM 22644 / CIP 104116 / JCM 14847 / LMG 12228 / 1C / PRS 101 / PAO1).